A 675-amino-acid polypeptide reads, in one-letter code: UvrABC system protein B (675 aa).

In terms of domain architecture, Helicase ATP-binding spans 32 to 417; the sequence is EGLSDGLAYQ…EHAGQVVEQV (386 aa). Residue 45-52 participates in ATP binding; that stretch reads GVTGSGKT. Residues 98–121 carry the Beta-hairpin motif; the sequence is YYDYYQPEAYVPSRDLFIEKDSAI. The region spanning 436-602 is the Helicase C-terminal domain; the sequence is QVDDLMSEIN…QIKKQVKDII (167 aa). The 36-residue stretch at 634-669 folds into the UVR domain; sequence IKEIAKLEKAMQQAARDLQFEEAAVLRDRIRDIKEN.

The protein belongs to the UvrB family. Forms a heterotetramer with UvrA during the search for lesions. Interacts with UvrC in an incision complex.

The protein localises to the cytoplasm. Functionally, the UvrABC repair system catalyzes the recognition and processing of DNA lesions. A damage recognition complex composed of 2 UvrA and 2 UvrB subunits scans DNA for abnormalities. Upon binding of the UvrA(2)B(2) complex to a putative damaged site, the DNA wraps around one UvrB monomer. DNA wrap is dependent on ATP binding by UvrB and probably causes local melting of the DNA helix, facilitating insertion of UvrB beta-hairpin between the DNA strands. Then UvrB probes one DNA strand for the presence of a lesion. If a lesion is found the UvrA subunits dissociate and the UvrB-DNA preincision complex is formed. This complex is subsequently bound by UvrC and the second UvrB is released. If no lesion is found, the DNA wraps around the other UvrB subunit that will check the other stand for damage. This chain is UvrABC system protein B, found in Neisseria meningitidis serogroup B (strain ATCC BAA-335 / MC58).